The primary structure comprises 404 residues: Pyrophosphate--fructose 6-phosphate 1-phosphotransferase (404 aa).

Gly-13 is a binding site for diphosphate. A Mg(2+)-binding site is contributed by Asn-108. Substrate is bound by residues 136–138 (TID), 180–182 (MGR), Glu-237, and 295–298 (YLQR). Asp-138 serves as the catalytic Proton acceptor.

Belongs to the phosphofructokinase type A (PFKA) family. PPi-dependent PFK group II subfamily. Clade 'B2' sub-subfamily. In terms of assembly, homodimer. Mg(2+) serves as cofactor.

The protein localises to the cytoplasm. The catalysed reaction is beta-D-fructose 6-phosphate + diphosphate = beta-D-fructose 1,6-bisphosphate + phosphate + H(+). The protein operates within carbohydrate degradation; glycolysis; D-glyceraldehyde 3-phosphate and glycerone phosphate from D-glucose: step 3/4. Non-allosteric. Functionally, catalyzes the phosphorylation of D-fructose 6-phosphate, the first committing step of glycolysis. Uses inorganic phosphate (PPi) as phosphoryl donor instead of ATP like common ATP-dependent phosphofructokinases (ATP-PFKs), which renders the reaction reversible, and can thus function both in glycolysis and gluconeogenesis. Consistently, PPi-PFK can replace the enzymes of both the forward (ATP-PFK) and reverse (fructose-bisphosphatase (FBPase)) reactions. The chain is Pyrophosphate--fructose 6-phosphate 1-phosphotransferase from Rhodospirillum rubrum (strain ATCC 11170 / ATH 1.1.1 / DSM 467 / LMG 4362 / NCIMB 8255 / S1).